The sequence spans 639 residues: Poly(A)-specific ribonuclease PARN (639 aa).

A divalent metal cation-binding residues include aspartate 28 and glutamate 30. Phosphoserine is present on residues serine 163 and serine 167. An R3H domain is found at lysine 178 to aspartate 245. An N6-acetyllysine modification is found at lysine 220. A divalent metal cation contacts are provided by aspartate 292 and aspartate 382. Lysine 499 bears the N6-acetyllysine mark. Serine 530 is modified (phosphoserine). Phosphoserine; by MAPKAPK2 is present on serine 557. The disordered stretch occupies residues alanine 560 to tryptophan 639. Serine 583 and serine 587 each carry phosphoserine. A compositionally biased stretch (basic residues) spans lysine 606–lysine 615. 3 positions are modified to phosphoserine: serine 619, serine 623, and serine 628. Threonine 631 bears the Phosphothreonine mark.

Belongs to the CAF1 family. In terms of assembly, homodimer. Found in a mRNA decay complex with RENT1, RENT2 and RENT3B. Interacts with KHSRP. Interacts with CELF1/CUGBP1. Interacts with ZC3HAV1 in an RNA-independent manner. Interacts with DHX36. Mg(2+) is required as a cofactor. In terms of processing, phosphorylation by MAPKAPK2, preventing GADD45A mRNA degradation after genotoxic stress. Ubiquitous.

The protein localises to the nucleus. Its subcellular location is the cytoplasm. The protein resides in the nucleolus. It carries out the reaction Exonucleolytic cleavage of poly(A) to 5'-AMP.. Its function is as follows. 3'-exoribonuclease that has a preference for poly(A) tails of mRNAs, thereby efficiently degrading poly(A) tails. Exonucleolytic degradation of the poly(A) tail is often the first step in the decay of eukaryotic mRNAs and is also used to silence certain maternal mRNAs translationally during oocyte maturation and early embryonic development. Interacts with both the 3'-end poly(A) tail and the 5'-end cap structure during degradation, the interaction with the cap structure being required for an efficient degradation of poly(A) tails. Involved in nonsense-mediated mRNA decay, a critical process of selective degradation of mRNAs that contain premature stop codons. Also involved in degradation of inherently unstable mRNAs that contain AU-rich elements (AREs) in their 3'-UTR, possibly via its interaction with KHSRP. Probably mediates the removal of poly(A) tails of AREs mRNAs, which constitutes the first step of destabilization. Also able to recognize and trim poly(A) tails of microRNAs such as MIR21 and H/ACA box snoRNAs (small nucleolar RNAs) leading to microRNAs degradation or snoRNA increased stability. The polypeptide is Poly(A)-specific ribonuclease PARN (PARN) (Homo sapiens (Human)).